A 137-amino-acid chain; its full sequence is Transcription antitermination protein NusB (137 aa).

The protein belongs to the NusB family.

In terms of biological role, involved in transcription antitermination. Required for transcription of ribosomal RNA (rRNA) genes. Binds specifically to the boxA antiterminator sequence of the ribosomal RNA (rrn) operons. The polypeptide is Transcription antitermination protein NusB (Actinobacillus pleuropneumoniae serotype 5b (strain L20)).